The chain runs to 193 residues: Imidazoleglycerol-phosphate dehydratase (193 aa).

It belongs to the imidazoleglycerol-phosphate dehydratase family.

It localises to the cytoplasm. It catalyses the reaction D-erythro-1-(imidazol-4-yl)glycerol 3-phosphate = 3-(imidazol-4-yl)-2-oxopropyl phosphate + H2O. It participates in amino-acid biosynthesis; L-histidine biosynthesis; L-histidine from 5-phospho-alpha-D-ribose 1-diphosphate: step 6/9. The polypeptide is Imidazoleglycerol-phosphate dehydratase (Sulfolobus acidocaldarius (strain ATCC 33909 / DSM 639 / JCM 8929 / NBRC 15157 / NCIMB 11770)).